Here is a 325-residue protein sequence, read N- to C-terminus: HPr kinase/phosphorylase (325 aa).

Residues H152 and K173 contribute to the active site. 167-174 (GESGLGKS) is an ATP binding site. S174 is a binding site for Mg(2+). D191 acts as the Proton acceptor; for phosphorylation activity. Proton donor; for dephosphorylation activity in catalysis. The segment at 215–224 (LEVRGIGLLD) is important for the catalytic mechanism of both phosphorylation and dephosphorylation. E216 provides a ligand contact to Mg(2+). R258 is a catalytic residue. Positions 279-284 (AVDAGR) are important for the catalytic mechanism of dephosphorylation.

This sequence belongs to the HPrK/P family. In terms of assembly, homohexamer. Mg(2+) serves as cofactor.

It catalyses the reaction [HPr protein]-L-serine + ATP = [HPr protein]-O-phospho-L-serine + ADP + H(+). It carries out the reaction [HPr protein]-O-phospho-L-serine + phosphate + H(+) = [HPr protein]-L-serine + diphosphate. Functionally, catalyzes the ATP- as well as the pyrophosphate-dependent phosphorylation of a specific serine residue in HPr, a phosphocarrier protein of the phosphoenolpyruvate-dependent sugar phosphotransferase system (PTS). HprK/P also catalyzes the pyrophosphate-producing, inorganic phosphate-dependent dephosphorylation (phosphorolysis) of seryl-phosphorylated HPr (P-Ser-HPr). The protein is HPr kinase/phosphorylase of Leptothrix cholodnii (strain ATCC 51168 / LMG 8142 / SP-6) (Leptothrix discophora (strain SP-6)).